The primary structure comprises 1851 residues: Voltage-dependent calcium channel type A subunit alpha-1 (1851 aa).

At 1 to 38 (MGGPKKEENPPGGGPTSLFILTEDNPIRKYTRFIIEWP) the chain is on the cytoplasmic side. One copy of the I repeat lies at 25–316 (NPIRKYTRFI…LVLGVLSGEF (292 aa)). The chain crosses the membrane as a helical span at residues 39-57 (PFEYAVLLTIIANCVVLAL). Residues 58–75 (EEHLPGGDKTVLAQKLEK) lie on the Extracellular side of the membrane. A helical transmembrane segment spans residues 76 to 95 (TEAYFLCIFCVEASLKILAL). The Cytoplasmic segment spans residues 96–107 (GLVLHKHSYLRN). Residues 108 to 128 (IWNIMDFFVVVTGFMTQYPQI) form a helical membrane-spanning segment. Residues 129–133 (GPEVD) are Extracellular-facing. Residues 134–152 (LRTLRAIRVLRPLKLVSGI) traverse the membrane as a helical segment. Topologically, residues 153-171 (PSLQVVLKSIIKAMAPLLQ) are cytoplasmic. A helical membrane pass occupies residues 172 to 191 (IGLLVLFAIVIFAIIGLEFY). Topologically, residues 192 to 288 (SGALHKTCYS…WTNDALGSAF (97 aa)) are extracellular. Asn-234 and Asn-235 each carry an N-linked (GlcNAc...) asparagine glycan. A helical transmembrane segment spans residues 289 to 313 (NWIYFVPLIVIGSFFMLNLVLGVLS). Topologically, residues 314–441 (GEFSNERNRV…FWIRHTVKTQ (128 aa)) are cytoplasmic. The interval 381–417 (RKKLKSLGKSKSTDTEEEEAEEDYGDDGYLKTRSKPQ) is disordered. The segment covering 395-406 (TEEEEAEEDYGD) has biased composition (acidic residues). An II repeat occupies 427-670 (EKRFRFWIRH…VFLAIAVDNL (244 aa)). A helical membrane pass occupies residues 442–460 (WFYWFVIVLVFLNTVCVAV). Topologically, residues 461–475 (EHYGQPSFLTEFLYY) are extracellular. A helical transmembrane segment spans residues 476–495 (AEFIFLGLFMSEMFIKMYAL). Topologically, residues 496 to 503 (GPRIYFES) are cytoplasmic. A helical membrane pass occupies residues 504 to 522 (SFNRFDCVVISGSIFEVIW). The Extracellular portion of the chain corresponds to 523–531 (SEVKGGSFG). Residues 532–550 (LSVLRALRLLRIFKVTKYW) traverse the membrane as a helical segment. The Cytoplasmic portion of the chain corresponds to 551-569 (SSLRNLVISLLNSMRSIIS). The chain crosses the membrane as a helical span at residues 570 to 589 (LLFLLFLFILIFALLGMQLF). Residues 590-642 (GGQFNLPGGTPETNFNTFPIALLTVFQILTGEDWNEVMYQGIISQGGAQKGMI) lie on the Extracellular side of the membrane. Residues 643–667 (YSIYFIVLVLFGNYTLLNVFLAIAV) form a helical membrane-spanning segment. The Cytoplasmic segment spans residues 668–767 (DNLANAQELT…IRRGAHWVVN (100 aa)). The segment at 710–741 (ENGDGAVAPSKSKGKKKEEEKKEEEEVTEGPK) is disordered. The stretch at 762–1049 (AHWVVNLPYF…IITFQEQGEA (288 aa)) is one III repeat. The chain crosses the membrane as a helical span at residues 768–786 (LPYFDFFIMVVISMSSIAL). Over 787 to 802 (AAEDPVRENSRRNKIL) the chain is Extracellular. Residues 803–822 (NYFDYAFTGVFTIEMLLKIV) form a helical membrane-spanning segment. At 823 to 834 (DLGVILHPGSYL) the chain is on the cytoplasmic side. The helical transmembrane segment at 835–853 (REFWNIMDAVVVICAAVSF) threads the bilayer. Residues 854-866 (GFDMSGSSAGQNL) lie on the Extracellular side of the membrane. Asn-865 carries an N-linked (GlcNAc...) asparagine glycan. A helical membrane pass occupies residues 867–885 (STIKSLRVLRVLRPLKTIK). Residues 886 to 904 (RVPKLKAVFDCVVNSLKNV) are Cytoplasmic-facing. Residues 905 to 924 (VNILIVYILFQFIFSVIGVQ) form a helical membrane-spanning segment. Residues 925–1013 (LFNGKFFYCT…EDRGPIQNFR (89 aa)) are Extracellular-facing. A helical membrane pass occupies residues 1014 to 1038 (IEMSIFYIVYFIVFPFFFVNIFVAL). Residues 1039-1093 (IIITFQEQGEAELQDGEIDKNQKSCIDFTIGARPLERYMPKNRNTFKYKVWRIVV) are Cytoplasmic-facing. An IV repeat occupies 1086 to 1347 (YKVWRIVVST…DNFDYLTRDS (262 aa)). Residues 1094 to 1122 (STPFEYFIMMLIVFNTLLLMMKYHNQGDM) traverse the membrane as a helical segment. The Extracellular segment spans residues 1123–1127 (YEKSL). A helical membrane pass occupies residues 1128 to 1147 (KYINMGFTGMFSVETVLKII). Residues 1148–1155 (GFGVKNFF) lie on the Cytoplasmic side of the membrane. A helical membrane pass occupies residues 1156-1174 (KDPWNIFDLITVLGSIVDA). Topologically, residues 1175–1184 (LWMEFGHDDS) are extracellular. The helical transmembrane segment at 1185 to 1203 (NSINVGFLRLFRAARLIKL) threads the bilayer. Residues 1204–1222 (LRQGYTIRILLWTFVQSFK) are Cytoplasmic-facing. The helical transmembrane segment at 1223–1242 (ALPYVCLLIAMLFFIYAIIG) threads the bilayer. Topologically, residues 1243–1308 (MQVFGNIKLG…DAEKAPGEYC (66 aa)) are extracellular. Residues 1306-1348 (EYCGSTLAYAYFVSFIFFCSFLMLNLFVAVIMDNFDYLTRDSS) form a phenylalkylamine binding region. The helical transmembrane segment at 1309–1333 (GSTLAYAYFVSFIFFCSFLMLNLFV) threads the bilayer. Over 1334 to 1851 (AVIMDNFDYL…HSDSDEEDWC (518 aa)) the chain is Cytoplasmic. An EF-hand domain is found at 1353-1388 (HHLDEFVRIWAEYDPNATGKIHYTEMYDMLKNMDPP). Asp-1366, Asn-1368, Thr-1370, Lys-1372, and Glu-1377 together coordinate Ca(2+). Disordered stretches follow at residues 1513–1572 (DASR…HHDI), 1588–1653 (TRHP…SPAR), 1685–1764 (RAGI…DRDR), and 1823–1851 (VLPSPVLNGFKPKSGLNPRHSDSDEEDWC). The segment covering 1589-1600 (RHPRHGNSHPRY) has biased composition (basic residues). Positions 1604-1619 (SWSASTSPARSPSPSR) are enriched in low complexity. Composition is skewed to polar residues over residues 1637-1649 (YGTTSLCQRSRSP) and 1698-1710 (KPSTLQLKPTNIN). Residues 1734–1764 (HHRDLLRDPRDMYYSSRERERDRERLRDRDR) are compositionally biased toward basic and acidic residues.

The protein belongs to the calcium channel alpha-1 subunit (TC 1.A.1.11) family. Expressed widely in the embryonic nervous system.

The protein resides in the membrane. Functionally, voltage-sensitive calcium channels (VSCC) mediate the entry of calcium ions into excitable cells and are also involved in a variety of calcium-dependent processes, including muscle contraction, neurotransmitter release, gene expression, cell motility, cell division and cell death. Probably encodes a dihydropyridine-insensitive current. Vital for survival to adulthood. The protein is Voltage-dependent calcium channel type A subunit alpha-1 (cac) of Drosophila melanogaster (Fruit fly).